Here is a 328-residue protein sequence, read N- to C-terminus: DNA-directed RNA polymerase subunit alpha (328 aa).

The segment at 1-234 (MQGSVTEFLK…EQLDAFVDLR (234 aa)) is alpha N-terminal domain (alpha-NTD). Positions 248-328 (FDPILLRPVD…NWPPASIAED (81 aa)) are alpha C-terminal domain (alpha-CTD).

The protein belongs to the RNA polymerase alpha chain family. Homodimer. The RNAP catalytic core consists of 2 alpha, 1 beta, 1 beta' and 1 omega subunit. When a sigma factor is associated with the core the holoenzyme is formed, which can initiate transcription.

The enzyme catalyses RNA(n) + a ribonucleoside 5'-triphosphate = RNA(n+1) + diphosphate. Its function is as follows. DNA-dependent RNA polymerase catalyzes the transcription of DNA into RNA using the four ribonucleoside triphosphates as substrates. This Haemophilus influenzae (strain PittEE) protein is DNA-directed RNA polymerase subunit alpha.